Reading from the N-terminus, the 165-residue chain is MSVNMEELRHQVMINQFVLAAGCAADQAKQLLQAAHWQFETALSAFFQESNVASAQHHQHMMCTPSNTPATPPNFPDALAMFSKLRTSESLQNSSSPASNACSPPGNFNPYWASSPPNQQPVWLPPASPTAHLHHHHHHPQPVWPPNSQPTGGPQKAMAAMDGQR.

Residues 119 to 165 (QQPVWLPPASPTAHLHHHHHHPQPVWPPNSQPTGGPQKAMAAMDGQR) form a disordered region.

Belongs to the UBALD family.

The polypeptide is UBA-like domain-containing protein 2-B (ubald2-b) (Xenopus laevis (African clawed frog)).